We begin with the raw amino-acid sequence, 737 residues long: Protein kinase C epsilon type (737 aa).

A C2 domain is found at 1 to 117 (MVVFNGLLKI…NGSRHFEDWI (117 aa)). At Ser62 the chain carries Phosphoserine. Residues 169–220 (GHKFMATYLRQPTYCSHCRDFIWGVIGKQGYQCQVCTCVVHKRCHELIITKC) form a Phorbol-ester/DAG-type 1 zinc finger. The Interaction with actin signature appears at 223 to 228 (LKKQET). Thr228 is modified (phosphothreonine). Ser234 bears the Phosphoserine mark. The Phorbol-ester/DAG-type 2 zinc finger occupies 242-292 (PHKFGIHNYKVPTFCDHCGSLLWGLLRQGLQCKVCKMNVHRRCETNVAPNC). Residue Thr309 is modified to Phosphothreonine. Positions 310 to 356 (PDKITNSGQRRKKLAAGAESPQPASGNSPSEDDRSKSAPTSPCDQEL) are disordered. 4 positions are modified to phosphoserine: Ser316, Ser329, Ser337, and Ser346. Phosphothreonine is present on Thr349. Ser350 carries the post-translational modification Phosphoserine; by MAPK11 and MAPK14. Residues Ser368 and Ser388 each carry the phosphoserine modification. Positions 369–398 (FDNRGEEHRASSSTDGQLASPGENGEVRQG) are disordered. One can recognise a Protein kinase domain in the interval 408–668 (FNFIKVLGKG…EDAIKQHPFF (261 aa)). Residues 414-422 (LGKGSFGKV) and Lys437 each bind ATP. Residue Asp532 is the Proton acceptor of the active site. Phosphothreonine; by PDPK1 is present on Thr566. Positions 669-737 (KEIDWVLLEQ…FSYFGEDLMP (69 aa)) constitute an AGC-kinase C-terminal domain. A phosphothreonine mark is found at Thr703 and Thr710. At Ser729 the chain carries Phosphoserine.

This sequence belongs to the protein kinase superfamily. AGC Ser/Thr protein kinase family. PKC subfamily. As to quaternary structure, forms a ternary complex with TRIM63 and RACK1/GN2BL1. Can form a complex with PDLIM5 and N-type calcium channel. Interacts with COPB1. Interacts with DGKQ. Interacts with STAT3. Interacts with YWHAB. Interacts with HSP90AB1; promotes functional activation in a heat shock-dependent manner. Interacts (via phorbol-ester/DAG-type 2 domain) with PRPH and VIM. Interacts with NLRP5/MATER. In terms of processing, phosphorylation on Thr-566 by PDPK1 triggers autophosphorylation on Ser-729. Phosphorylation in the hinge domain at Ser-350 by MAPK11 or MAPK14, Ser-346 by GSK3B and Ser-368 by autophosphorylation is required for interaction with YWHAB. In response to growth factors, phosphorylated at Thr-703 and Ser-729 by the mTORC2 complex, promoting autophosphorylation and activation of PRKCE.

Its subcellular location is the cytoplasm. It is found in the cytoskeleton. The protein resides in the cell membrane. It localises to the perinuclear region. The protein localises to the nucleus. It carries out the reaction L-seryl-[protein] + ATP = O-phospho-L-seryl-[protein] + ADP + H(+). It catalyses the reaction L-threonyl-[protein] + ATP = O-phospho-L-threonyl-[protein] + ADP + H(+). Its activity is regulated as follows. Novel PKCs (PRKCD, PRKCE, PRKCH and PRKCQ) are calcium-insensitive, but activated by diacylglycerol (DAG) and phosphatidylserine. Three specific sites; Thr-566 (activation loop of the kinase domain), Thr-710 (turn motif) and Ser-729 (hydrophobic region), need to be phosphorylated for its full activation. Calcium-independent, phospholipid- and diacylglycerol (DAG)-dependent serine/threonine-protein kinase that plays essential roles in the regulation of multiple cellular processes linked to cytoskeletal proteins, such as cell adhesion, motility, migration and cell cycle, functions in neuron growth and ion channel regulation, and is involved in immune response, cancer cell invasion and regulation of apoptosis. Mediates cell adhesion to the extracellular matrix via integrin-dependent signaling, by mediating angiotensin-2-induced activation of integrin beta-1 (ITGB1) in cardiac fibroblasts. Phosphorylates MARCKS, which phosphorylates and activates PTK2/FAK, leading to the spread of cardiomyocytes. Involved in the control of the directional transport of ITGB1 in mesenchymal cells by phosphorylating vimentin (VIM), an intermediate filament (IF) protein. In epithelial cells, associates with and phosphorylates keratin-8 (KRT8), which induces targeting of desmoplakin at desmosomes and regulates cell-cell contact. Phosphorylates IQGAP1, which binds to CDC42, mediating epithelial cell-cell detachment prior to migration. During cytokinesis, forms a complex with YWHAB, which is crucial for daughter cell separation, and facilitates abscission by a mechanism which may implicate the regulation of RHOA. In cardiac myocytes, regulates myofilament function and excitation coupling at the Z-lines, where it is indirectly associated with F-actin via interaction with COPB1. During endothelin-induced cardiomyocyte hypertrophy, mediates activation of PTK2/FAK, which is critical for cardiomyocyte survival and regulation of sarcomere length. Plays a role in the pathogenesis of dilated cardiomyopathy via persistent phosphorylation of troponin I (TNNI3). Involved in nerve growth factor (NFG)-induced neurite outgrowth and neuron morphological change independently of its kinase activity, by inhibition of RHOA pathway, activation of CDC42 and cytoskeletal rearrangement. May be involved in presynaptic facilitation by mediating phorbol ester-induced synaptic potentiation. Phosphorylates gamma-aminobutyric acid receptor subunit gamma-2 (GABRG2), which reduces the response of GABA receptors to ethanol and benzodiazepines and may mediate acute tolerance to the intoxicating effects of ethanol. Upon PMA treatment, phosphorylates the capsaicin- and heat-activated cation channel TRPV1, which is required for bradykinin-induced sensitization of the heat response in nociceptive neurons. Is able to form a complex with PDLIM5 and N-type calcium channel, and may enhance channel activities and potentiates fast synaptic transmission by phosphorylating the pore-forming alpha subunit CACNA1B (CaV2.2). Downstream of TLR4, plays an important role in the lipopolysaccharide (LPS)-induced immune response by phosphorylating and activating TICAM2/TRAM, which in turn activates the transcription factor IRF3 and subsequent cytokines production. In differentiating erythroid progenitors, is regulated by EPO and controls the protection against the TNFSF10/TRAIL-mediated apoptosis, via BCL2. May be involved in the regulation of the insulin-induced phosphorylation and activation of AKT1. Phosphorylates NLRP5/MATER and may thereby modulate AKT pathway activation in cumulus cells. Phosphorylates and activates LRRK1, which phosphorylates RAB proteins involved in intracellular trafficking. The polypeptide is Protein kinase C epsilon type (Prkce) (Rattus norvegicus (Rat)).